A 468-amino-acid chain; its full sequence is 6-phospho-beta-galactosidase (468 aa).

The D-galactose 6-phosphate site is built by Gln-19, His-116, Asn-159, Glu-160, and Asn-297. The active-site Proton donor is Glu-160. Residue Glu-375 is the Nucleophile of the active site. The D-galactose 6-phosphate site is built by Ser-428, Trp-429, Lys-435, and Tyr-437.

It belongs to the glycosyl hydrolase 1 family.

It carries out the reaction a 6-phospho-beta-D-galactoside + H2O = D-galactose 6-phosphate + an alcohol. The protein operates within carbohydrate metabolism; lactose degradation; D-galactose 6-phosphate and beta-D-glucose from lactose 6-phosphate: step 1/1. The polypeptide is 6-phospho-beta-galactosidase (Streptococcus pneumoniae (strain JJA)).